The chain runs to 326 residues: MKTIRTGMMTLAALAVLGTNVVSATSEPVKELSVNVNGQHIEQAAIFDKGQQTVLVPLRDVAESLGFQVKWNAETKAAEVNKGAIFSYAKVGEDRYPFAKMYKTLGAEPRLLNGNTYVPVAFVDEILQAEVNVTDDAVTVVDEESDVAPVRTGTITTLNKREDGGVSFQLNGYETGIILHVDKETKITTADGKELKPEDLQLGMEVEATHQKFMAMSMPQSGAVSIVVKSGLETPEVLGTAGKVASIDKDQEGSYKMLVEGQALAENAPEKVALIVGKDTKIVSAKDNKELAPEDLKAEMKVFAYYGPKLTRSLPPIGVAEKIVVE.

The N-terminal stretch at 1-24 (MKTIRTGMMTLAALAVLGTNVVSA) is a signal peptide. 2 tandem repeats follow at residues 177–208 (IILH…EVEA) and 272–304 (VALI…KVFA). A 2 X 32 AA approximate repeats region spans residues 177–304 (IILHVDKETK…DLKAEMKVFA (128 aa)).

In terms of processing, proteolytically cleaved to yield at least three forms (BBRPI-A, -B, and -C).

The protein resides in the secreted. Functionally, shows inhibitory activity towards serine proteases, such as trypsin, chymotrypsin and subtilisin. May form a trypsin-inhibitor complex in a molar ratio of 1:1. The polypeptide is Protease inhibitor (Brevibacillus choshinensis).